Consider the following 214-residue polypeptide: Soluble inorganic pyrophosphatase (214 aa).

Residues K64, R78, and Y90 each coordinate substrate. Residues D100, D105, and D137 each contribute to the Mg(2+) site. Position 174 (Y174) interacts with substrate.

The protein belongs to the PPase family. Requires Mg(2+) as cofactor.

The protein resides in the cytoplasm. It carries out the reaction diphosphate + H2O = 2 phosphate + H(+). The sequence is that of Soluble inorganic pyrophosphatase (IPP) from Oryza sativa subsp. indica (Rice).